The following is a 318-amino-acid chain: Ornithine carbamoyltransferase (318 aa).

Carbamoyl phosphate-binding positions include 63 to 66, Gln-90, Arg-114, and 141 to 144; these read STRT and HPCQ. L-ornithine contacts are provided by residues Asn-172, Asp-235, and 239–240; that span reads SM. Residues 275 to 276 and Arg-303 each bind carbamoyl phosphate; that span reads CL.

This sequence belongs to the aspartate/ornithine carbamoyltransferase superfamily. OTCase family.

It localises to the cytoplasm. The enzyme catalyses carbamoyl phosphate + L-ornithine = L-citrulline + phosphate + H(+). Its pathway is amino-acid biosynthesis; L-arginine biosynthesis; L-arginine from L-ornithine and carbamoyl phosphate: step 1/3. In terms of biological role, reversibly catalyzes the transfer of the carbamoyl group from carbamoyl phosphate (CP) to the N(epsilon) atom of ornithine (ORN) to produce L-citrulline. The polypeptide is Ornithine carbamoyltransferase (Prochlorococcus marinus (strain SARG / CCMP1375 / SS120)).